The sequence spans 64 residues: Large ribosomal subunit protein bL32 (64 aa).

A compositionally biased stretch (basic residues) spans 1–16; that stretch reads MAVPKHRKSKAKKRSR. Residues 1–22 form a disordered region; sequence MAVPKHRKSKAKKRSRQAANDK.

This sequence belongs to the bacterial ribosomal protein bL32 family.

The polypeptide is Large ribosomal subunit protein bL32 (Brachyspira hyodysenteriae (strain ATCC 49526 / WA1)).